We begin with the raw amino-acid sequence, 165 residues long: Putative 4-hydroxy-4-methyl-2-oxoglutarate aldolase (165 aa).

Substrate contacts are provided by residues 80-83 (GGNL) and Arg102. Asp103 contributes to the a divalent metal cation binding site.

This sequence belongs to the class II aldolase/RraA-like family. Homotrimer. The cofactor is a divalent metal cation.

It catalyses the reaction 4-hydroxy-4-methyl-2-oxoglutarate = 2 pyruvate. The enzyme catalyses oxaloacetate + H(+) = pyruvate + CO2. Catalyzes the aldol cleavage of 4-hydroxy-4-methyl-2-oxoglutarate (HMG) into 2 molecules of pyruvate. Also contains a secondary oxaloacetate (OAA) decarboxylase activity due to the common pyruvate enolate transition state formed following C-C bond cleavage in the retro-aldol and decarboxylation reactions. The polypeptide is Putative 4-hydroxy-4-methyl-2-oxoglutarate aldolase (Burkholderia mallei (strain NCTC 10247)).